Here is a 414-residue protein sequence, read N- to C-terminus: GA-binding protein subunit beta-2 (414 aa).

ANK repeat units lie at residues 5–34 (DLGK…PFTT), 37–66 (LGTS…SRDA), 70–99 (VDRT…DVNA), 103–132 (LQMT…DVYA), and 136–166 (FDKS…QVNT). Residue Ser-218 is modified to Phosphoserine. A coiled-coil region spans residues 310-362 (EEMKEGSERELLQQQLQEANRRAQEYRHQLLKKEQEAEQYRLRLEAMAQQQTN).

Heterotetramer of two alpha and two beta subunits. The C-terminal is necessary for the formation of a heterotetrameric GABP-alpha-2/beta-2 complex, and also facilitates homotypic dimerization. Interacts with ADGRB2. As to expression, high levels in thymus, spleen, kidney and intestine.

The protein resides in the nucleus. In terms of biological role, transcription factor capable of interacting with purine rich repeats (GA repeats). Must associate with GABP-alpha to bind DNA. This is GA-binding protein subunit beta-2 (Gabpb2) from Mus musculus (Mouse).